Here is a 183-residue protein sequence, read N- to C-terminus: Small ribosomal subunit protein uS4c (183 aa).

The S4 RNA-binding domain maps to 82-143; sequence MRLDNILFRL…KQRSKALIQN (62 aa).

The protein belongs to the universal ribosomal protein uS4 family. In terms of assembly, part of the 30S ribosomal subunit. Contacts protein S5. The interaction surface between S4 and S5 is involved in control of translational fidelity.

It is found in the plastid. The protein localises to the chloroplast. Functionally, one of the primary rRNA binding proteins, it binds directly to 16S rRNA where it nucleates assembly of the body of the 30S subunit. Its function is as follows. With S5 and S12 plays an important role in translational accuracy. This chain is Small ribosomal subunit protein uS4c (rps4), found in Schizorhiza neglecta (Lapeirousia neglecta).